The following is a 280-amino-acid chain: Thymidylate synthase (280 aa).

Residue R21 coordinates dUMP. H51 provides a ligand contact to (6R)-5,10-methylene-5,6,7,8-tetrahydrofolate. DUMP is bound at residue 142-143 (RR). The Nucleophile role is filled by C162. DUMP-binding positions include 182 to 185 (RSAD), N193, and 223 to 225 (HLY). D185 serves as a coordination point for (6R)-5,10-methylene-5,6,7,8-tetrahydrofolate. Residue A279 coordinates (6R)-5,10-methylene-5,6,7,8-tetrahydrofolate.

Belongs to the thymidylate synthase family. Bacterial-type ThyA subfamily. In terms of assembly, homodimer.

The protein localises to the cytoplasm. The enzyme catalyses dUMP + (6R)-5,10-methylene-5,6,7,8-tetrahydrofolate = 7,8-dihydrofolate + dTMP. It functions in the pathway pyrimidine metabolism; dTTP biosynthesis. Functionally, catalyzes the reductive methylation of 2'-deoxyuridine-5'-monophosphate (dUMP) to 2'-deoxythymidine-5'-monophosphate (dTMP) while utilizing 5,10-methylenetetrahydrofolate (mTHF) as the methyl donor and reductant in the reaction, yielding dihydrofolate (DHF) as a by-product. This enzymatic reaction provides an intracellular de novo source of dTMP, an essential precursor for DNA biosynthesis. This is Thymidylate synthase from Acinetobacter baylyi (strain ATCC 33305 / BD413 / ADP1).